Here is a 342-residue protein sequence, read N- to C-terminus: MAGRLHVEVRLQDGVIRAVDTRLQRPLPQISRLLVGQTAEAALRRLPLLFGLCAAAQQVAALRALERAAGWAAIAEVEEGRTRLGELESIRESLLRLVQVWELPVPLERLKALLALCRRAAARLQALTAFRAAPLPADAELEGTLAALAAAWADLQPPAPADWLRPRLDRWQEVALGGPPPQAFTADELPALLAQLRASDARAEIAGQPRLGGPAASAGAQATASAQIEQHVGALLRRTAQAIDSLQSPPAPPAVAGLAAGEGVGLARTARGWLLHRVCLDDGAVGTWQLLAPTDWNFHADGPLRRRLCGVRVAAGEVEALLRELILALDPCVAFEVKIVHA.

Belongs to the HupK family.

This is Hydrogenase expression/formation protein HupK (hupK) from Azotobacter vinelandii.